The following is a 187-amino-acid chain: 3'-5' DNA exonuclease Cap18 (187 aa).

In terms of domain architecture, Exonuclease spans 9–173 (VSVDVETSGP…HDARYQAELF (165 aa)). Aspartate 12, methionine 25, histidine 160, and aspartate 165 together coordinate Mg(2+). Histidine 160 (proton donor/acceptor) is an active-site residue.

Belongs to the Cap18 exonuclease family. As to quaternary structure, homodimer.

Effector component of a CBASS antivirus system. CBASS (cyclic oligonucleotide-based antiphage signaling system) provides immunity against bacteriophage. The CD-NTase protein synthesizes cyclic nucleotides in response to infection; these serve as specific second messenger signals. The signals activate a diverse range of effectors, leading to bacterial cell death and thus abortive phage infection. A type III CBASS system. A sequence non-specific 3'-5' DNA exonuclease that preferentially degrades ssDNA with 3' overhangs or a mismatch at the 3' end. Expression of this CBASS system (Cap17-CapW-CdnC-Cap7-Cap6-Cap18-Cap19) in a susceptible E.coli (strain JP313) confers resistance to bacteriophage lambda cI--. The polypeptide is 3'-5' DNA exonuclease Cap18 (Escherichia coli).